Reading from the N-terminus, the 1365-residue chain is Histone-lysine N-methyltransferase NSD2 (1365 aa).

A phosphothreonine mark is found at Thr-110 and Thr-114. Ser-121 is subject to Phosphoserine. A disordered region spans residues Ala-149–Arg-169. Ser-172 bears the Phosphoserine mark. A PWWP 1 domain is found at Val-222–Gly-286. Disordered stretches follow at residues Met-373 to Asp-455, Gln-513 to Ala-567, and Cys-594 to Ser-658. Ser-376 carries the phosphoserine modification. Position 422 is a phosphothreonine (Thr-422). The HMG box DNA-binding region spans Lys-453–Gly-521. Residues Asp-552 to Ala-567 show a composition bias toward basic and acidic residues. Polar residues predominate over residues Ala-603–Leu-623. The segment covering Pro-632–Gln-648 has biased composition (acidic residues). PHD-type zinc fingers lie at residues Glu-667–Gly-713, Ile-714–Ser-770, and Val-831–Gly-875. The PWWP 2 domain maps to Phe-880–Gly-942. The region spanning Ser-1011–Gln-1061 is the AWS domain. Residues Cys-1016, Cys-1018, Cys-1026, Cys-1032, Cys-1041, Cys-1046, and Cys-1052 each contribute to the Zn(2+) site. The SET domain maps to Pro-1063–Asn-1180. S-adenosyl-L-methionine contacts are provided by residues Trp-1075, Thr-1115 to Tyr-1118, and Asn-1141 to His-1142. Cys-1144 serves as a coordination point for Zn(2+). An S-adenosyl-L-methionine-binding site is contributed by Asn-1186. The Post-SET domain maps to Glu-1187–Gly-1203. Cys-1191 lines the Zn(2+) pocket. Residue Arg-1192 participates in S-adenosyl-L-methionine binding. Zn(2+) contacts are provided by Cys-1193 and Cys-1198. The tract at residues Pro-1206 to Gly-1232 is disordered. Basic residues predominate over residues Lys-1219 to Ala-1230. Residues Glu-1239 to Asp-1286 form a PHD-type 4; atypical zinc finger. Positions Arg-1329–Lys-1365 are disordered. Basic residues predominate over residues Ser-1348–Arg-1359.

It belongs to the class V-like SAM-binding methyltransferase superfamily. Histone-lysine methyltransferase family. SET2 subfamily. As to quaternary structure, interacts with HDAC1. Interacts (via PHD-type zinc fingers 1, 2 and 3) with SALL1. Interacts (via PHD-type 1, 2 and 3) with SALL4. Interacts with NANOG. Interacts with OGT. Interacts (via HMG box) with NKX2-5. During B-cell development, expressed in early B2 cell progenitors (pre- and pro-B cells) with a decrease in expression at later stages.

It localises to the nucleus. The protein resides in the chromosome. It carries out the reaction L-lysyl(36)-[histone H3] + S-adenosyl-L-methionine = N(6)-methyl-L-lysyl(36)-[histone H3] + S-adenosyl-L-homocysteine + H(+). It catalyses the reaction L-lysyl(36)-[histone H3] + 2 S-adenosyl-L-methionine = N(6),N(6)-dimethyl-L-lysyl(36)-[histone H3] + 2 S-adenosyl-L-homocysteine + 2 H(+). Its function is as follows. Histone methyltransferase which specifically dimethylates nucleosomal histone H3 at 'Lys-36' (H3K36me2). Also monomethylates nucleosomal histone H3 at 'Lys-36' (H3K36me) in vitro. Does not trimethylate nucleosomal histone H3 at 'Lys-36' (H3K36me3). However, specifically trimethylates histone H3 at 'Lys-36' (H3K36me3) at euchromatic regions in embryonic stem (ES) cells. By methylating histone H3 at 'Lys-36', involved in the regulation of gene transcription during various biological processes. In ES cells, associates with developmental transcription factors such as SALL1 and represses inappropriate gene transcription mediated by histone deacetylation. During heart development, associates with transcription factor NKX2-5 to repress transcription of NKX2-5 target genes. Plays an essential role in adipogenesis, by regulating expression of genes involved in pre-adipocyte differentiation. During T-cell receptor (TCR) and CD28-mediated T-cell activation, promotes the transcription of transcription factor BCL6 which is required for follicular helper T (Tfh) cell differentiation. During B-cell development, required for the generation of the B1 lineage. During B2 cell activation, may contribute to the control of isotype class switch recombination (CRS), splenic germinal center formation, and the humoral immune response. Plays a role in class switch recombination of the immunoglobulin heavy chain (IgH) locus during B-cell activation. By regulating the methylation of histone H3 at 'Lys-36' and histone H4 at 'Lys-20' at the IgH locus, involved in TP53BP1 recruitment to the IgH switch region and promotes the transcription of IgA. Histone methyltransferase which specifically dimethylates nucleosomal histone H3 at 'Lys-36' (H3K36me2). Mono-, di- and tri-methylates histone H3 at 'Lys-27' (H3K27me, H3K27me2, H3K27me3). Methylation of histone H3 at 'Lys-27' is controversial. May act as a transcription regulator that binds DNA and suppresses IL5 transcription through HDAC recruitment. This is Histone-lysine N-methyltransferase NSD2 (Nsd2) from Mus musculus (Mouse).